The following is a 182-amino-acid chain: Transcription termination/antitermination protein NusG (182 aa).

It belongs to the NusG family.

In terms of biological role, participates in transcription elongation, termination and antitermination. This Chlamydia trachomatis serovar D (strain ATCC VR-885 / DSM 19411 / UW-3/Cx) protein is Transcription termination/antitermination protein NusG.